The sequence spans 480 residues: 3-isopropylmalate dehydratase large subunit (480 aa).

Positions 361, 421, and 424 each coordinate [4Fe-4S] cluster.

Belongs to the aconitase/IPM isomerase family. LeuC type 1 subfamily. In terms of assembly, heterodimer of LeuC and LeuD. Requires [4Fe-4S] cluster as cofactor.

The enzyme catalyses (2R,3S)-3-isopropylmalate = (2S)-2-isopropylmalate. The protein operates within amino-acid biosynthesis; L-leucine biosynthesis; L-leucine from 3-methyl-2-oxobutanoate: step 2/4. Functionally, catalyzes the isomerization between 2-isopropylmalate and 3-isopropylmalate, via the formation of 2-isopropylmaleate. The protein is 3-isopropylmalate dehydratase large subunit of Corynebacterium diphtheriae (strain ATCC 700971 / NCTC 13129 / Biotype gravis).